The following is a 151-amino-acid chain: UPF0208 membrane protein KPN78578_26420 (151 aa).

Transmembrane regions (helical) follow at residues 46-65 and 69-91; these read YAIR…QIAL and LGPA…WWLG.

The protein belongs to the UPF0208 family.

Its subcellular location is the cell inner membrane. This is UPF0208 membrane protein KPN78578_26420 from Klebsiella pneumoniae subsp. pneumoniae (strain ATCC 700721 / MGH 78578).